Here is a 209-residue protein sequence, read N- to C-terminus: Ribosomal RNA large subunit methyltransferase E (209 aa).

Residues glycine 60, tryptophan 62, aspartate 80, aspartate 96, and aspartate 121 each coordinate S-adenosyl-L-methionine. Lysine 161 (proton acceptor) is an active-site residue.

It belongs to the class I-like SAM-binding methyltransferase superfamily. RNA methyltransferase RlmE family.

The protein localises to the cytoplasm. The catalysed reaction is uridine(2552) in 23S rRNA + S-adenosyl-L-methionine = 2'-O-methyluridine(2552) in 23S rRNA + S-adenosyl-L-homocysteine + H(+). Specifically methylates the uridine in position 2552 of 23S rRNA at the 2'-O position of the ribose in the fully assembled 50S ribosomal subunit. In Pseudomonas fluorescens (strain Pf0-1), this protein is Ribosomal RNA large subunit methyltransferase E.